The following is a 388-amino-acid chain: Ectopic P granules protein 6 (388 aa).

Residues 1–25 show a composition bias toward basic and acidic residues; that stretch reads MSKKEETIFFRIEKENRPESSKKEE. A disordered region spans residues 1-33; the sequence is MSKKEETIFFRIEKENRPESSKKEEDENSTEEM. Residues 217–257 form a WD 1 repeat; sequence AHLTDIAQVALNCQGTLVATGSTKGTVIRVFDARTKGPLYE. The LRRG motif motif lies at 258–261; that stretch reads LRRG. The stretch at 262 to 301 is one WD 2 repeat; that stretch reads TVQAHLQCMAFSPCSSYLAVASDKGTLHMFGIRDAEPQKK. A required for atg-2 binding region spans residues 265–328; it reads AHLQCMAFSP…LDRPVMAIGF (64 aa).

Belongs to the WD repeat PROPPIN family. In terms of assembly, interacts with atg-2; the interaction is direct. Widely expressed in tissues including pharyngeal, muscle and neuronal tissues.

It is found in the cytoplasm. Its subcellular location is the preautophagosomal structure membrane. Its function is as follows. Component of the epg-6/atg-2 complex, which is involved in the generation of autophagosomes from omegasomes and in the distribution of atg-9 and atg-13 during the autophagy-mediated degradation of protein aggregates. Binds to phosphatidylinositols on preautophagosomes, which are early autophagic structures, to promote autophagosome formation. In particular, binds with high affinity to phosphatidylinositols including phosphatidylinositol 3-phosphate (PtdIns(3)P) and phosphatidylinositol 5-phosphate (PtdIns(5)P), but more weakly to phosphatidylinositol 4-phosphate (PtdIns(4)P) and phosphatidylinositol 3,5-bisphosphate (PtdIns(3,5)P2). Involved in autophagy-mediated degradation of ribosomal RNA and ribosomal proteins in lysosomes, which is essential for maintaining nucleotide homeostasis. In Caenorhabditis elegans, this protein is Ectopic P granules protein 6.